Here is a 116-residue protein sequence, read N- to C-terminus: G antigen 2A (116 aa).

Positions 1–116 (MSWRGRSTYR…PEEGEKQSQC (116 aa)) are disordered. Acidic residues-rich tracts occupy residues 31–44 (FSDE…EEGE) and 86–95 (ECEDGPDGQE). The segment covering 102–116 (EEVKTPEEGEKQSQC) has biased composition (basic and acidic residues).

This sequence belongs to the GAGE family.

This is G antigen 2A (GAGE2A) from Homo sapiens (Human).